Here is a 189-residue protein sequence, read N- to C-terminus: MVRYVKFSRTANRGVHISAEARINERIRVPEVRLVGPNGEQVGIVRIEDARKLAFDADLDLVEVAPNAKPPVCKIMDYGKFKYEAAQKARESRKNQQQTVVKEQKLRPKIDDHDYETKKNNVIRFLEKGSKVKVTIMFRGREQARPELGYRLLERLANDVVDFGIVETRAKQDGRNMTMVLGPVRKGKK.

This sequence belongs to the IF-3 family. As to quaternary structure, monomer.

The protein resides in the cytoplasm. IF-3 binds to the 30S ribosomal subunit and shifts the equilibrium between 70S ribosomes and their 50S and 30S subunits in favor of the free subunits, thus enhancing the availability of 30S subunits on which protein synthesis initiation begins. This Corynebacterium glutamicum (strain ATCC 13032 / DSM 20300 / JCM 1318 / BCRC 11384 / CCUG 27702 / LMG 3730 / NBRC 12168 / NCIMB 10025 / NRRL B-2784 / 534) protein is Translation initiation factor IF-3.